The chain runs to 364 residues: Chorismate synthase (364 aa).

Arg-47 serves as a coordination point for NADP(+). FMN-binding positions include 124 to 126 (RAS), Gly-287, 302 to 306 (KPTAT), and Arg-328.

The protein belongs to the chorismate synthase family. As to quaternary structure, homotetramer. FMNH2 serves as cofactor.

The catalysed reaction is 5-O-(1-carboxyvinyl)-3-phosphoshikimate = chorismate + phosphate. Its pathway is metabolic intermediate biosynthesis; chorismate biosynthesis; chorismate from D-erythrose 4-phosphate and phosphoenolpyruvate: step 7/7. Functionally, catalyzes the anti-1,4-elimination of the C-3 phosphate and the C-6 proR hydrogen from 5-enolpyruvylshikimate-3-phosphate (EPSP) to yield chorismate, which is the branch point compound that serves as the starting substrate for the three terminal pathways of aromatic amino acid biosynthesis. This reaction introduces a second double bond into the aromatic ring system. In Prochlorococcus marinus (strain MIT 9515), this protein is Chorismate synthase.